The primary structure comprises 159 residues: Phosphopantetheine adenylyltransferase (159 aa).

Threonine 10 provides a ligand contact to substrate. Residues 10–11 (TF) and histidine 18 each bind ATP. Substrate-binding residues include lysine 42, leucine 74, and arginine 88. ATP contacts are provided by residues 89-91 (GLR), glutamate 99, and 124-130 (NSFISST).

Belongs to the bacterial CoaD family. In terms of assembly, homohexamer. Mg(2+) is required as a cofactor.

The protein localises to the cytoplasm. The catalysed reaction is (R)-4'-phosphopantetheine + ATP + H(+) = 3'-dephospho-CoA + diphosphate. The protein operates within cofactor biosynthesis; coenzyme A biosynthesis; CoA from (R)-pantothenate: step 4/5. Its function is as follows. Reversibly transfers an adenylyl group from ATP to 4'-phosphopantetheine, yielding dephospho-CoA (dPCoA) and pyrophosphate. This Shewanella halifaxensis (strain HAW-EB4) protein is Phosphopantetheine adenylyltransferase.